Reading from the N-terminus, the 304-residue chain is Protein YIF1B (304 aa).

The Cytoplasmic segment spans residues 1-146 (MMEYPNQSGF…APRFDINAPD (146 aa)). The tract at residues 21–54 (MRGSAMEPSDPTQLFDDTSSGVNKHEPGRVGKSP) is disordered. Over residues 30-42 (DPTQLFDDTSSGV) the composition is skewed to polar residues. A helical transmembrane segment spans residues 147–167 (LYIPVMGFITYVLVAGLALGT). Over 168–182 (QNRFSPEILGIQASS) the chain is Extracellular. Residues 183-203 (ALVWLIIEVLAVLLSLYLVTV) traverse the membrane as a helical segment. At 204 to 212 (NTDLTTIDL) the chain is on the cytoplasmic side. Residues 213 to 233 (VAFSGYKYVGMIVGVVAGLLF) traverse the membrane as a helical segment. Residues 234 to 236 (GRT) lie on the Extracellular side of the membrane. A helical membrane pass occupies residues 237-257 (GYYLALLWFCASIFVFTIRTL). The Cytoplasmic portion of the chain corresponds to 258–282 (RLKILSEAAAEGRLVRGTKNQLRMY). The chain crosses the membrane as a helical span at residues 283 to 303 (LTMAIAAAQPVFMYWLTFHLV). R304 is a topological domain (extracellular).

It belongs to the YIF1 family.

It is found in the endoplasmic reticulum membrane. The protein localises to the golgi apparatus membrane. It localises to the endoplasmic reticulum-Golgi intermediate compartment membrane. Functions in endoplasmic reticulum to Golgi vesicle-mediated transport and regulates the proper organization of the endoplasmic reticulum and the Golgi. Plays a key role in targeting to neuronal dendrites receptors such as HTR1A. Plays also a role in primary cilium and sperm flagellum assembly probably through protein transport to these compartments. The chain is Protein YIF1B (yif1b) from Danio rerio (Zebrafish).